The following is a 79-amino-acid chain: uncharacterized protein (79 aa).

The first 33 residues, 1-33 (MRLSIRAIVLFALVWIGLLMSGYGVLVGSKVNA), serve as a signal peptide directing secretion.

This is an uncharacterized protein from Salmonella paratyphi A (strain ATCC 9150 / SARB42).